Reading from the N-terminus, the 499-residue chain is Pentatricopeptide repeat-containing protein PPR5, chloroplastic (499 aa).

The span at 1–12 (MLACPSTSSPWP) shows a compositional bias: low complexity. The interval 1–28 (MLACPSTSSPWPQRQPPSPCPGGGGGAT) is disordered. A chloroplast-targeting transit peptide spans 1–45 (MLACPSTSSPWPQRQPPSPCPGGGGGATRHVALAARSKRRGAGPA). PPR repeat units follow at residues 123-157 (DNGIYSKLISVMGRKGQIRMAMWLFSQMRNSGCKP), 158-193 (DTSVYNSLIGAHLHSRDKTKALAKALGYFEKMKCIE), 198-232 (TIVTYNILLRAFAQAGDTKQVDMLFKDLDESVVSP), 233-267 (DVYTYNGVLDAYGKNGMIKEMESVLVRMKSTQCRP), 268-302 (DVITFNILIDSYGRKQTFDKMEQVFKSLLRSKERP), 303-337 (THPTFNSMITNYGRARLREKAESVVEKMEELGFKP), 338-372 (NYVTQECLIIMYAHCDCVSKARQVFDELVTSQTKV), 373-407 (HLSSLNSMLEAYCMNGLHTEADRLLDTALQQCVVP), and 408-442 (NGSTYKLLYKAYTKANDKLLVQKLLKRMNKQGIVP). A disordered region spans residues 458–499 (DRKPRTSPGINSASKPSTDSAGDSETATSDKPEVSVWHVAAT). The span at 465–484 (PGINSASKPSTDSAGDSETA) shows a compositional bias: polar residues.

The protein belongs to the PPR family. P subfamily.

It is found in the plastid. The protein localises to the chloroplast. Functionally, involved in the biogenesis of the plastid translation machinery by promoting the splicing of group II introns in chloroplasts. Stabilizes the chloroplast trnG pre-RNA by directly binding to a group II intron, where it protects an endonuclease-sensitive site and stimulates splicing. Binds specific sites within group II intron trnG pre-RNA. Binds with high affinity to the 5'-UTR of the chloroplastic petA mRNA. The protein is Pentatricopeptide repeat-containing protein PPR5, chloroplastic of Zea mays (Maize).